We begin with the raw amino-acid sequence, 236 residues long: Phosphoribosylaminoimidazole-succinocarboxamide synthase (236 aa).

It belongs to the SAICAR synthetase family.

The catalysed reaction is 5-amino-1-(5-phospho-D-ribosyl)imidazole-4-carboxylate + L-aspartate + ATP = (2S)-2-[5-amino-1-(5-phospho-beta-D-ribosyl)imidazole-4-carboxamido]succinate + ADP + phosphate + 2 H(+). Its pathway is purine metabolism; IMP biosynthesis via de novo pathway; 5-amino-1-(5-phospho-D-ribosyl)imidazole-4-carboxamide from 5-amino-1-(5-phospho-D-ribosyl)imidazole-4-carboxylate: step 1/2. The sequence is that of Phosphoribosylaminoimidazole-succinocarboxamide synthase from Hahella chejuensis (strain KCTC 2396).